The sequence spans 269 residues: 3-methyl-2-oxobutanoate hydroxymethyltransferase (269 aa).

The Mg(2+) site is built by D52 and D91. 3-methyl-2-oxobutanoate is bound by residues 52-53, D91, and K121; that span reads DT. Residue E123 participates in Mg(2+) binding. Residue E186 is the Proton acceptor of the active site.

This sequence belongs to the PanB family. Homodecamer; pentamer of dimers. Requires Mg(2+) as cofactor.

The protein resides in the cytoplasm. It catalyses the reaction 3-methyl-2-oxobutanoate + (6R)-5,10-methylene-5,6,7,8-tetrahydrofolate + H2O = 2-dehydropantoate + (6S)-5,6,7,8-tetrahydrofolate. It participates in cofactor biosynthesis; (R)-pantothenate biosynthesis; (R)-pantoate from 3-methyl-2-oxobutanoate: step 1/2. Functionally, catalyzes the reversible reaction in which hydroxymethyl group from 5,10-methylenetetrahydrofolate is transferred onto alpha-ketoisovalerate to form ketopantoate. In Rhodopirellula baltica (strain DSM 10527 / NCIMB 13988 / SH1), this protein is 3-methyl-2-oxobutanoate hydroxymethyltransferase.